Here is a 490-residue protein sequence, read N- to C-terminus: Betaine aldehyde dehydrogenase (490 aa).

K(+) is bound at residue D93. 150 to 152 is a binding site for NAD(+); it reads GAW. Catalysis depends on K162, which acts as the Charge relay system. Residue 176 to 179 coordinates NAD(+); that stretch reads KPSE. Position 180 (V180) interacts with K(+). 230 to 233 is an NAD(+) binding site; the sequence is GIAS. L246 serves as a coordination point for K(+). E252 serves as the catalytic Proton acceptor. NAD(+) contacts are provided by G254, C286, and E387. C286 acts as the Nucleophile in catalysis. C286 carries the cysteine sulfenic acid (-SOH) modification. K(+) is bound by residues K457 and G460. E464 (charge relay system) is an active-site residue.

The protein belongs to the aldehyde dehydrogenase family. As to quaternary structure, dimer of dimers. K(+) is required as a cofactor.

The catalysed reaction is betaine aldehyde + NAD(+) + H2O = glycine betaine + NADH + 2 H(+). It participates in amine and polyamine biosynthesis; betaine biosynthesis via choline pathway; betaine from betaine aldehyde: step 1/1. Functionally, involved in the biosynthesis of the osmoprotectant glycine betaine. Catalyzes the irreversible oxidation of betaine aldehyde to the corresponding acid. This is Betaine aldehyde dehydrogenase from Yersinia pestis.